We begin with the raw amino-acid sequence, 274 residues long: uncharacterized protein (274 aa).

The next 5 helical transmembrane spans lie at 9-29 (SLLLTEVAAYFTSTTLFVSIL), 64-84 (WFWHFYAFISLLNPLFTFFIL), 135-155 (LAGHYLLGYLFYTHTFLALLL), 165-185 (MSSMQFVGLGIYAIGSIWQNA), and 219-239 (IIVYTGIALIAQHWLIWLVLG).

It belongs to the steroid 5-alpha reductase family.

It localises to the endoplasmic reticulum membrane. This is an uncharacterized protein from Schizosaccharomyces pombe (strain 972 / ATCC 24843) (Fission yeast).